Here is a 359-residue protein sequence, read N- to C-terminus: NADH-quinone oxidoreductase subunit H (359 aa).

The next 8 membrane-spanning stretches (helical) occupy residues 16-36 (IWPATVWPVLWVLIKIVAVLA), 94-114 (GLFILGPIMTIMPALAAWAVI), 128-148 (GLLFIMAITSLEVYGVIIAGW), 167-187 (VSYEIAMGFCLVVVLMVSGSL), 205-225 (GLTFLSWNWLPLLPIFVVYFI), 261-281 (FFLAEYANMILVSVLCVLLFL), 296-316 (IPGWIWLGLKTFVVVTIFLWV), and 331-351 (LGWKIFIPVTLVWLVVVGAWM).

Belongs to the complex I subunit 1 family. As to quaternary structure, NDH-1 is composed of 14 different subunits. Subunits NuoA, H, J, K, L, M, N constitute the membrane sector of the complex.

It localises to the cell inner membrane. The catalysed reaction is a quinone + NADH + 5 H(+)(in) = a quinol + NAD(+) + 4 H(+)(out). In terms of biological role, NDH-1 shuttles electrons from NADH, via FMN and iron-sulfur (Fe-S) centers, to quinones in the respiratory chain. The immediate electron acceptor for the enzyme in this species is believed to be ubiquinone. Couples the redox reaction to proton translocation (for every two electrons transferred, four hydrogen ions are translocated across the cytoplasmic membrane), and thus conserves the redox energy in a proton gradient. This subunit may bind ubiquinone. This Polaromonas naphthalenivorans (strain CJ2) protein is NADH-quinone oxidoreductase subunit H.